We begin with the raw amino-acid sequence, 557 residues long: Probable protein kinase UbiB (557 aa).

The Protein kinase domain maps to 121–509 (SFDTVPLASA…RKLQTRVVTA (389 aa)). ATP contacts are provided by residues 127–135 (LASASIAQV) and K154. Catalysis depends on D289, which acts as the Proton acceptor. 2 helical membrane passes run 506 to 526 (VVTAITGSGLLVVAAVLYGLH) and 535 to 555 (VPVWSWISGGAGSAALLVAWL).

The protein belongs to the ABC1 family. UbiB subfamily.

It is found in the cell inner membrane. It functions in the pathway cofactor biosynthesis; ubiquinone biosynthesis [regulation]. Its function is as follows. Is probably a protein kinase regulator of UbiI activity which is involved in aerobic coenzyme Q (ubiquinone) biosynthesis. This Xanthomonas axonopodis pv. citri (strain 306) protein is Probable protein kinase UbiB.